Reading from the N-terminus, the 135-residue chain is S-adenosylmethionine decarboxylase proenzyme (135 aa).

Catalysis depends on serine 63, which acts as the Schiff-base intermediate with substrate; via pyruvic acid. Serine 63 carries the post-translational modification Pyruvic acid (Ser); by autocatalysis. Residue histidine 68 is the Proton acceptor; for processing activity of the active site. The active-site Proton donor; for catalytic activity is cysteine 83.

It belongs to the prokaryotic AdoMetDC family. Type 1 subfamily. As to quaternary structure, heterotetramer of two alpha and two beta chains arranged as a dimer of alpha/beta heterodimers. It depends on pyruvate as a cofactor. In terms of processing, is synthesized initially as an inactive proenzyme. Formation of the active enzyme involves a self-maturation process in which the active site pyruvoyl group is generated from an internal serine residue via an autocatalytic post-translational modification. Two non-identical subunits are generated from the proenzyme in this reaction, and the pyruvate is formed at the N-terminus of the alpha chain, which is derived from the carboxyl end of the proenzyme. The post-translation cleavage follows an unusual pathway, termed non-hydrolytic serinolysis, in which the side chain hydroxyl group of the serine supplies its oxygen atom to form the C-terminus of the beta chain, while the remainder of the serine residue undergoes an oxidative deamination to produce ammonia and the pyruvoyl group blocking the N-terminus of the alpha chain.

It catalyses the reaction S-adenosyl-L-methionine + H(+) = S-adenosyl 3-(methylsulfanyl)propylamine + CO2. The protein operates within amine and polyamine biosynthesis; S-adenosylmethioninamine biosynthesis; S-adenosylmethioninamine from S-adenosyl-L-methionine: step 1/1. Its function is as follows. Catalyzes the decarboxylation of S-adenosylmethionine to S-adenosylmethioninamine (dcAdoMet), the propylamine donor required for the synthesis of the polyamines spermine and spermidine from the diamine putrescine. This chain is S-adenosylmethionine decarboxylase proenzyme, found in Thermodesulfovibrio yellowstonii (strain ATCC 51303 / DSM 11347 / YP87).